A 132-amino-acid polypeptide reads, in one-letter code: UPF0299 membrane protein YohJ (132 aa).

A run of 4 helical transmembrane segments spans residues 7–27 (IIWQ…AGIF), 31–51 (LLPI…VLLA), 63–83 (GCYV…VGVM), and 93–113 (FGPV…VVSW).

Belongs to the UPF0299 family.

The protein localises to the cell inner membrane. This Salmonella agona (strain SL483) protein is UPF0299 membrane protein YohJ.